The chain runs to 140 residues: uncharacterized protein (140 aa).

Residue Asn-36 is glycosylated (N-linked (GlcNAc...) asparagine). The helical transmembrane segment at 91-107 (LFMSLIGLCVCYMNLVF) threads the bilayer. Polar residues predominate over residues 113–122 (QPSSSGSKGN). The disordered stretch occupies residues 113–140 (QPSSSGSKGNTETTIETTTEVETETAKQ). Positions 131–140 (TEVETETAKQ) are enriched in acidic residues.

The protein resides in the endoplasmic reticulum membrane. This is an uncharacterized protein from Saccharomyces cerevisiae (strain ATCC 204508 / S288c) (Baker's yeast).